Here is a 149-residue protein sequence, read N- to C-terminus: Transcriptional repressor NrdR (149 aa).

The segment at 3–34 (CPFCSENDTKVIDSRLVADGHQVRRRRQCLAC) is a zinc-finger region. In terms of domain architecture, ATP-cone spans 49–139 (PKVIKSNGNR…VYRSFEDIRE (91 aa)).

The protein belongs to the NrdR family. Requires Zn(2+) as cofactor.

Functionally, negatively regulates transcription of bacterial ribonucleotide reductase nrd genes and operons by binding to NrdR-boxes. The chain is Transcriptional repressor NrdR from Vibrio atlanticus (strain LGP32) (Vibrio splendidus (strain Mel32)).